We begin with the raw amino-acid sequence, 146 residues long: 3-dehydroquinate dehydratase (146 aa).

The active-site Proton acceptor is tyrosine 24. Positions 73, 79, and 86 each coordinate substrate. Catalysis depends on histidine 99, which acts as the Proton donor. Residues 100 to 101 and arginine 110 each bind substrate; that span reads LS.

Belongs to the type-II 3-dehydroquinase family. As to quaternary structure, homododecamer.

The catalysed reaction is 3-dehydroquinate = 3-dehydroshikimate + H2O. It participates in metabolic intermediate biosynthesis; chorismate biosynthesis; chorismate from D-erythrose 4-phosphate and phosphoenolpyruvate: step 3/7. Functionally, catalyzes a trans-dehydration via an enolate intermediate. This is 3-dehydroquinate dehydratase from Shewanella baltica (strain OS223).